A 1639-amino-acid chain; its full sequence is Merozoite surface protein 1 (1639 aa).

An N-terminal signal peptide occupies residues 1 to 19; sequence MKIIFFLCSFLFFIINTQC. Polar residues-rich tracts occupy residues 58–67 and 107–119; these read SGTAVTTSTP and NSRRTNPSDNSSD. Disordered stretches follow at residues 58 to 78 and 94 to 122; these read SGTAVTTSTPGSKGSVASGGS and VASGGSVASGGSGNSRRTNPSDNSSDSDA. 2 N-linked (GlcNAc...) asparagine glycosylation sites follow: N116 and N268. The segment at 689–764 is disordered; that stretch reads KKNIKTEGQS…VPTPPAPVNN (76 aa). Composition is skewed to polar residues over residues 694-704 and 711-722; these read TEGQSDNSEPS and GQATTKPGQQAG. Low complexity predominate over residues 730–741; it reads VQAQAQEQKQAQ. N764, N768, N783, and N844 each carry an N-linked (GlcNAc...) asparagine glycan. The segment at 893 to 915 is disordered; that stretch reads SMQPLSLTPQDKPEVSANDDTSH. N920, N964, N1058, N1165, and N1174 each carry an N-linked (GlcNAc...) asparagine glycan. Residues 1002–1116 are required for binding to host erythrocyte cell membrane; sequence QLSFDLYNKY…EESIQTEDNY (115 aa). Positions 1199–1212 are enriched in polar residues; it reads VSESGSDTLEQSQP. Residues 1199–1229 form a disordered region; sequence VSESGSDTLEQSQPKKPASTHVGAESNTITT. N1445 and N1526 each carry an N-linked (GlcNAc...) asparagine glycan. EGF-like domains are found at residues 1530–1570 and 1571–1618; these read HQCV…VENP and NPTC…IFCS. 6 disulfides stabilise this stretch: C1532/C1543, C1537/C1553, C1555/C1566, C1574/C1587, C1581/C1601, and C1603/C1617. The GPI-anchor amidated serine moiety is linked to residue S1618. A propeptide spans 1619 to 1639 (removed in mature form); that stretch reads SSNFLGISFLLILMLILYSFI.

Forms a complex composed of subunits p83, p30, p38, and p42 which remain non-covalently associated; the complex is formed at the merozoite surface prior to egress from host erythrocytes. Forms a complex composed of processed MSP1 subunits, MSP6 subunit p36 and MSP7; the complex is formed at the merozoite surface prior to egress from host erythrocytes. Within the complex, interacts (via subunit p38) with MSP6 subunit p36 and (via subunits p83, p30 and p38) with MSP7 (via subunit p22). Forms a complex composed of MSP1, MSP6, DBLMSP1 and DBLMSP2. Within the complex, interacts (via subunit p38) with DBLMSP1 and DBLMSP2. Forms a complex composed of MSP1, and rhoptry proteins RhopH3, RAP1 and CLAG9/RhopH3. Within the complex, interacts (via subunits p42 and p19) with RhopH3 (via C-terminus). Forms a complex composed of MSP1, MSP6, MSP7, MSP9 and MSP3; within the complex, MSP6 and MSP9 mediate the binding to the host erythrocyte. Interacts (via subunits p19 and p42) with MSP9; the interaction is direct; MSP1 subunits p19 or p42, and MSP9 form a co-ligand complex that interacts with host SLC4A1/Band 3 protein. May interact with PFD6. Interacts with host spectrin. As to quaternary structure, interacts with host glycophorin GYPA in a sialic acid-independent manner. In terms of assembly, interacts with host proinflammatory cytokine S100P; the interaction blocks S100P inflammatory and chemotactic activities. Interacts with host SLC4A1/Band 3 (via 5ABC region) on the host erythrocyte surface in a sialic acid-independent manner. Post-translationally, the p190 precursor is cleaved by SUB1 prior to merozoite egress into 4 subunits p83, p30, p38, and p42 which remain non-covalently associated. SUB1-mediated proteolytic cleavage occurs in an orderly manner; the first cleavage occurs at the p83/p30 site, followed by cleavage at the p30/p38 site, the last cleavage occurs at the p38/p42 site. The order of cleavage is essential for parasite viability. SUB1-mediated processing is essential for merozoite egress. In a second processing step during erythrocyte invasion, p42 is cleaved by SUB2 into p33 and p19; the latter remains attached to the merozoite surface via its GPI-anchor and stays on the surface during the subsequent ring stage.

Its subcellular location is the cell membrane. The protein resides in the secreted. The protein localises to the vacuole membrane. Functionally, during the asexual blood stage, involved in merozoite egress from host erythrocytes possibly via its interaction with the host cytoskeleton protein spectrin resulting in the destabilization of the host cytoskeleton and thus leading to erythrocyte cell membrane rupture. Involved in the binding to host erythrocytes and is required for host erythrocyte invasion. In terms of biological role, by binding to host proinflammatory cytokine S100P may interfere with host immune responses. Its function is as follows. Involved in merozoite invasion of host erythrocytes. May play a role in the biogenesis and/or function of the food vacuole during the intraerythrocytic development. This chain is Merozoite surface protein 1, found in Plasmodium falciparum (isolate Wellcome).